A 539-amino-acid polypeptide reads, in one-letter code: Chaperonin GroEL 1 (539 aa).

ATP is bound by residues 29–32, 86–90, Gly-413, and Asp-495; these read TLGP and DGTTT.

It belongs to the chaperonin (HSP60) family. In terms of assembly, forms a cylinder of 14 subunits composed of two heptameric rings stacked back-to-back. Interacts with the co-chaperonin GroES.

The protein localises to the cytoplasm. The enzyme catalyses ATP + H2O + a folded polypeptide = ADP + phosphate + an unfolded polypeptide.. Its function is as follows. Together with its co-chaperonin GroES, plays an essential role in assisting protein folding. The GroEL-GroES system forms a nano-cage that allows encapsulation of the non-native substrate proteins and provides a physical environment optimized to promote and accelerate protein folding. This is Chaperonin GroEL 1 from Mycobacterium bovis (strain ATCC BAA-935 / AF2122/97).